We begin with the raw amino-acid sequence, 361 residues long: sn-glycerol-3-phosphate import ATP-binding protein UgpC (361 aa).

In terms of domain architecture, ABC transporter spans 4–235 (LSLKGIRKSY…PETVFVAGFI (232 aa)). 37–44 (GPSGCGKS) contacts ATP.

It belongs to the ABC transporter superfamily. sn-glycerol-3-phosphate importer (TC 3.A.1.1.3) family. The complex is composed of two ATP-binding proteins (UgpC), two transmembrane proteins (UgpA and UgpE) and a solute-binding protein (UgpB).

The protein localises to the cell inner membrane. The catalysed reaction is sn-glycerol 3-phosphate(out) + ATP + H2O = sn-glycerol 3-phosphate(in) + ADP + phosphate + H(+). Its function is as follows. Part of the ABC transporter complex UgpBAEC involved in sn-glycerol-3-phosphate (G3P) import. Responsible for energy coupling to the transport system. The sequence is that of sn-glycerol-3-phosphate import ATP-binding protein UgpC from Burkholderia ambifaria (strain ATCC BAA-244 / DSM 16087 / CCUG 44356 / LMG 19182 / AMMD) (Burkholderia cepacia (strain AMMD)).